Consider the following 436-residue polypeptide: Adenylosuccinate synthetase (436 aa).

GTP-binding positions include 12 to 18 (GDEGKGK) and 40 to 42 (GHT). The active-site Proton acceptor is aspartate 13. Mg(2+) contacts are provided by aspartate 13 and glycine 40. IMP is bound by residues 13 to 16 (DEGK), 38 to 41 (NAGH), threonine 130, arginine 144, glutamine 230, threonine 245, and arginine 309. The Proton donor role is filled by histidine 41. 305–311 (TTTGRPR) provides a ligand contact to substrate. GTP-binding positions include arginine 311, 337-339 (KLD), and 419-421 (SVG).

Belongs to the adenylosuccinate synthetase family. Homodimer. Requires Mg(2+) as cofactor.

It is found in the cytoplasm. The catalysed reaction is IMP + L-aspartate + GTP = N(6)-(1,2-dicarboxyethyl)-AMP + GDP + phosphate + 2 H(+). It participates in purine metabolism; AMP biosynthesis via de novo pathway; AMP from IMP: step 1/2. Its function is as follows. Plays an important role in the de novo pathway of purine nucleotide biosynthesis. Catalyzes the first committed step in the biosynthesis of AMP from IMP. This chain is Adenylosuccinate synthetase, found in Myxococcus xanthus (strain DK1622).